The primary structure comprises 549 residues: Chaperonin GroEL 1 (549 aa).

Residues 30–33 (TLGP), Lys-51, 87–91 (DGTTT), Gly-415, 479–481 (NAA), and Asp-495 contribute to the ATP site.

It belongs to the chaperonin (HSP60) family. Forms a cylinder of 14 subunits composed of two heptameric rings stacked back-to-back. Interacts with the co-chaperonin GroES.

It is found in the cytoplasm. It carries out the reaction ATP + H2O + a folded polypeptide = ADP + phosphate + an unfolded polypeptide.. Functionally, together with its co-chaperonin GroES, plays an essential role in assisting protein folding. The GroEL-GroES system forms a nano-cage that allows encapsulation of the non-native substrate proteins and provides a physical environment optimized to promote and accelerate protein folding. This Azoarcus sp. (strain BH72) protein is Chaperonin GroEL 1.